Here is a 464-residue protein sequence, read N- to C-terminus: Protein FAM90A7 (464 aa).

Disordered stretches follow at residues 1 to 42, 69 to 387, and 410 to 437; these read MMAR…DPRL, VPAT…AGHD, and AAPS…SEAP. Basic and acidic residues-rich tracts occupy residues 74–89 and 97–111; these read GKKE…KPRA and NKDK…RQQD. A compositionally biased stretch (low complexity) spans 180 to 197; it reads LASLSPLRKASLSSSSSL.

It belongs to the FAM90 family.

The polypeptide is Protein FAM90A7 (Homo sapiens (Human)).